A 554-amino-acid chain; its full sequence is 2-succinyl-5-enolpyruvyl-6-hydroxy-3-cyclohexene-1-carboxylate synthase (554 aa).

Belongs to the TPP enzyme family. MenD subfamily. In terms of assembly, homodimer. Mg(2+) serves as cofactor. Requires Mn(2+) as cofactor. It depends on thiamine diphosphate as a cofactor.

The enzyme catalyses isochorismate + 2-oxoglutarate + H(+) = 5-enolpyruvoyl-6-hydroxy-2-succinyl-cyclohex-3-ene-1-carboxylate + CO2. The protein operates within quinol/quinone metabolism; 1,4-dihydroxy-2-naphthoate biosynthesis; 1,4-dihydroxy-2-naphthoate from chorismate: step 2/7. Its pathway is quinol/quinone metabolism; menaquinone biosynthesis. Catalyzes the thiamine diphosphate-dependent decarboxylation of 2-oxoglutarate and the subsequent addition of the resulting succinic semialdehyde-thiamine pyrophosphate anion to isochorismate to yield 2-succinyl-5-enolpyruvyl-6-hydroxy-3-cyclohexene-1-carboxylate (SEPHCHC). The polypeptide is 2-succinyl-5-enolpyruvyl-6-hydroxy-3-cyclohexene-1-carboxylate synthase (Flavobacterium johnsoniae (strain ATCC 17061 / DSM 2064 / JCM 8514 / BCRC 14874 / CCUG 350202 / NBRC 14942 / NCIMB 11054 / UW101) (Cytophaga johnsonae)).